Reading from the N-terminus, the 207-residue chain is Large ribosomal subunit protein uL4 (207 aa).

The disordered stretch occupies residues 45–78 (RQGTHAVKNRSARRGGGRKPWRQKGTGRARQGSI). Over residues 51-71 (VKNRSARRGGGRKPWRQKGTG) the composition is skewed to basic residues.

The protein belongs to the universal ribosomal protein uL4 family. Part of the 50S ribosomal subunit.

In terms of biological role, one of the primary rRNA binding proteins, this protein initially binds near the 5'-end of the 23S rRNA. It is important during the early stages of 50S assembly. It makes multiple contacts with different domains of the 23S rRNA in the assembled 50S subunit and ribosome. Forms part of the polypeptide exit tunnel. The polypeptide is Large ribosomal subunit protein uL4 (Lactiplantibacillus plantarum (strain ATCC BAA-793 / NCIMB 8826 / WCFS1) (Lactobacillus plantarum)).